Here is a 337-residue protein sequence, read N- to C-terminus: 4-hydroxy-2-oxovalerate aldolase (337 aa).

The Pyruvate carboxyltransferase domain maps to 6–256 (IRIMDTTLRD…ETGIDLFQIM (251 aa)). 14–15 (RD) is a substrate binding site. Position 15 (aspartate 15) interacts with Mn(2+). The active-site Proton acceptor is the histidine 18. Substrate is bound by residues serine 168 and histidine 195. Positions 195 and 197 each coordinate Mn(2+). Tyrosine 286 contributes to the substrate binding site.

The protein belongs to the 4-hydroxy-2-oxovalerate aldolase family.

The enzyme catalyses (S)-4-hydroxy-2-oxopentanoate = acetaldehyde + pyruvate. The polypeptide is 4-hydroxy-2-oxovalerate aldolase (nahM) (Geobacillus genomosp. 3).